The chain runs to 906 residues: NACHT, LRR and PYD domains-containing protein 1b allele 4 (906 aa).

Residues 1 to 22 (MEESPPKQKSNTKVAQHEGQQD) are disordered. The NACHT domain maps to 126–435 (QLVIIEGAAG…EFFAAISCIL (310 aa)). 132–139 (GAAGIGKS) contributes to the ATP binding site. LRR repeat units follow at residues 627 to 647 (NLEG…QSLC) and 684 to 704 (SLTE…RMLC). One can recognise an FIIND (incomplete) domain in the interval 789 to 906 (FWGPTGPVAT…FQEHGSRNAR (118 aa)).

It belongs to the NLRP family. As to expression, expressed in macrophages.

It is found in the cytoplasm. Its subcellular location is the cytosol. Probable inactive allele of Nlrp1b, which lacks a CARD domain, suggesting that it is not able to form an inflammasome. Contrary to Nlrp1b allele 1, allele 4 is not activated by B.anthracis lethal toxin and no other activation signal is reported. The protein is NACHT, LRR and PYD domains-containing protein 1b allele 4 of Mus musculus (Mouse).